The primary structure comprises 757 residues: Probable ubiquitin carboxyl-terminal hydrolase MINDY-4 (757 aa).

Disordered regions lie at residues 152–173 (FVSSKRPPHKSKPMQTVPGETP) and 190–334 (SLDV…LPGG). Residues 190 to 201 (SLDVKRMGENSR) are compositionally biased toward basic and acidic residues. Phosphoserine is present on residues Ser219 and Ser223. Residues 232 to 242 (SSPSSSSTQPQ) are compositionally biased toward low complexity. The segment covering 254–277 (CTQQDILASSNSSPSRTSLGQLSE) has biased composition (polar residues). Ser289 bears the Phosphoserine mark. Residues 299 to 310 (PPWDRARPRDPS) show a composition bias toward basic and acidic residues. Residue Cys456 is the Nucleophile of the active site. His677 (proton acceptor) is an active-site residue.

It belongs to the MINDY deubiquitinase family. FAM188 subfamily.

The catalysed reaction is Thiol-dependent hydrolysis of ester, thioester, amide, peptide and isopeptide bonds formed by the C-terminal Gly of ubiquitin (a 76-residue protein attached to proteins as an intracellular targeting signal).. Its function is as follows. Probable hydrolase that can remove 'Lys-48'-linked conjugated ubiquitin from proteins. This is Probable ubiquitin carboxyl-terminal hydrolase MINDY-4 from Homo sapiens (Human).